The sequence spans 1109 residues: DNA mismatch repair protein MSH7 (1109 aa).

2 disordered regions span residues 19 to 45 (TKGL…KEGD) and 61 to 86 (DEVR…KPAE). Residues 61-74 (DEVRGTDTPPEKVP) show a composition bias toward basic and acidic residues. ATP is bound at residue 853–860 (GPNMGGKS).

It belongs to the DNA mismatch repair MutS family. In terms of assembly, heterodimer consisting of MSH2-MSH7 (MutS gamma).

The protein resides in the nucleus. Component of the post-replicative DNA mismatch repair system (MMR). Forms the heterodimer MutS gamma (MSH2-MSH7 heterodimer) which binds to DNA mismatches thereby initiating DNA repair. MutS gamma recognizes specifically the T/G single base mismatch, but not trinucleotide insertion-deletion loops (IDL). The chain is DNA mismatch repair protein MSH7 (MSH7) from Arabidopsis thaliana (Mouse-ear cress).